The following is a 458-amino-acid chain: Pyruvate kinase (458 aa).

Arg33 is a substrate binding site. The K(+) site is built by Asn35, Ser37, and Asp67. Residue 35–38 coordinates ATP; it reads NASH. ATP is bound by residues Arg74 and Lys148. A Mg(2+)-binding site is contributed by Glu214. Substrate contacts are provided by Gly237, Asp238, and Thr270. Asp238 contributes to the Mg(2+) binding site.

Belongs to the pyruvate kinase family. As to quaternary structure, homotetramer. A divalent metal cation is required as a cofactor.

It catalyses the reaction pyruvate + ATP = phosphoenolpyruvate + ADP + H(+). It participates in carbohydrate degradation; glycolysis; pyruvate from D-glyceraldehyde 3-phosphate: step 5/5. With respect to regulation, not activated by classical allosteric effectors. This Aeropyrum pernix (strain ATCC 700893 / DSM 11879 / JCM 9820 / NBRC 100138 / K1) protein is Pyruvate kinase (pyk).